We begin with the raw amino-acid sequence, 984 residues long: Putative formate dehydrogenase SAV2309 (984 aa).

One can recognise a 2Fe-2S ferredoxin-type domain in the interval 3–79 (EHLVVTLDGK…PMTVNTVNND (77 aa)). The [2Fe-2S] cluster site is built by Cys37, Cys48, Cys51, and Cys63. The 4Fe-4S His(Cys)3-ligated-type domain occupies 79–119 (DVKDAQKEALDRILEKHMLYCTVCDYNNGDCEIHNTMDAWG). [4Fe-4S] cluster is bound by residues His95, Cys99, Cys102, Cys109, Cys147, Cys150, Cys153, Cys157, Cys190, Cys193, Cys196, Cys200, Cys264, Cys267, Cys271, and Cys299. 4Fe-4S ferredoxin-type domains are found at residues 138–165 (PFYR…VNET) and 181–211 (NDVP…VNME). The interval 252 to 984 (MRKERIKKTK…YVFPGNQVDK (733 aa)) is formate dehydrogenase. Residues 257 to 313 (IKKTKTVCTYCGVGCSFEVWTKDREILKVQPSHDSPANKIVTCVKGKFSWGHINSDQ) form the 4Fe-4S Mo/W bis-MGD-type domain.

The protein in the C-terminal section; belongs to the prokaryotic molybdopterin-containing oxidoreductase family. It depends on [2Fe-2S] cluster as a cofactor. The cofactor is [4Fe-4S] cluster. Mo-bis(molybdopterin guanine dinucleotide) is required as a cofactor.

The catalysed reaction is formate + NAD(+) = CO2 + NADH. In Staphylococcus aureus (strain Mu50 / ATCC 700699), this protein is Putative formate dehydrogenase SAV2309.